A 163-amino-acid chain; its full sequence is Adenosine 5'-monophosphoramidase HINT2 (163 aa).

The N-terminal 17 residues, 1–17 (MAAAVVLAAGLCVARRA), are a transit peptide targeting the mitochondrion. Positions 55-163 (IFSRILDRSL…GGRQLQWPPG (109 aa)) constitute an HIT domain. AMP contacts are provided by S63 and D80. K119 carries the N6-acetyllysine modification. N136 serves as a coordination point for AMP. K139 carries the post-translational modification N6-acetyllysine. AMP contacts are provided by residues 142 to 145 (AQSV) and 149 to 151 (HIH). A Histidine triad motif motif is present at residues 147–151 (HLHIH). H149 acts as the Tele-AMP-histidine intermediate in catalysis.

Belongs to the HINT family.

It localises to the mitochondrion. It carries out the reaction adenosine 5'-phosphoramidate + H2O = AMP + NH4(+). In terms of biological role, exhibits adenosine 5'-monophosphoramidase activity, hydrolyzing purine nucleotide phosphoramidates with a single phosphate group such as adenosine 5'monophosphoramidate (AMP-NH2) to yield AMP and NH2. Hydrolyzes adenosine 5'-O-p-nitrophenylphosphoramidate (AMP-pNA). May be involved in steroid biosynthesis. May play a role in apoptosis. The sequence is that of Adenosine 5'-monophosphoramidase HINT2 from Bos taurus (Bovine).